Here is a 345-residue protein sequence, read N- to C-terminus: Centromere protein U (345 aa).

2 stretches are compositionally biased toward basic residues: residues 1 to 10 (MSSKKRTKRN) and 19 to 29 (HKGRSHPRRKF). 2 disordered regions span residues 1–37 (MSSK…EPDV) and 64–153 (AVDA…SSVQ). Residues 88 to 106 (NAERSEKMLLETPEGDVHE) show a composition bias toward basic and acidic residues. The span at 142–152 (SDSSVNSPSSV) shows a compositional bias: low complexity. Residues 201–294 (CSAFEDQVTD…QDYLDYREEN (94 aa)) adopt a coiled-coil conformation. The Nuclear localization signal signature appears at 222–239 (KKKNAKVVADIKKKRQRL).

This sequence belongs to the CENP-U/AME1 family. As to quaternary structure, interacts with CENPH-CENPI complex at the kinetochore.

It localises to the nucleus. Its subcellular location is the chromosome. The protein localises to the centromere. Its function is as follows. Probable component of a centromeric complex involved in assembly of kinetochore proteins, mitotic progression and chromosome segregation. Required for maintenance of sister chromatid adhesion during mitotic checkpoint activation. This chain is Centromere protein U (CENPU), found in Gallus gallus (Chicken).